We begin with the raw amino-acid sequence, 182 residues long: NADH-quinone oxidoreductase subunit B (182 aa).

The [4Fe-4S] cluster site is built by cysteine 61, cysteine 62, cysteine 126, and cysteine 156.

Belongs to the complex I 20 kDa subunit family. In terms of assembly, NDH-1 is composed of 14 different subunits. Subunits NuoB, C, D, E, F, and G constitute the peripheral sector of the complex. It depends on [4Fe-4S] cluster as a cofactor.

Its subcellular location is the cell inner membrane. The enzyme catalyses a quinone + NADH + 5 H(+)(in) = a quinol + NAD(+) + 4 H(+)(out). In terms of biological role, NDH-1 shuttles electrons from NADH, via FMN and iron-sulfur (Fe-S) centers, to quinones in the respiratory chain. The immediate electron acceptor for the enzyme in this species is believed to be ubiquinone. Couples the redox reaction to proton translocation (for every two electrons transferred, four hydrogen ions are translocated across the cytoplasmic membrane), and thus conserves the redox energy in a proton gradient. The chain is NADH-quinone oxidoreductase subunit B from Xanthomonas oryzae pv. oryzae (strain PXO99A).